A 1023-amino-acid polypeptide reads, in one-letter code: FHIP family protein AGAP011705 (1023 aa).

3 stretches are compositionally biased toward polar residues: residues 1 to 13 (MSWL…RQSF), 806 to 825 (SMTS…SSSY), and 868 to 888 (GLNH…ASMN). Disordered regions lie at residues 1–39 (MSWL…AGGG) and 797–927 (GKLL…AETQ). A compositionally biased stretch (low complexity) spans 889–906 (VPSPVGQQQHQHQSVSSV).

It belongs to the FHIP family.

This is FHIP family protein AGAP011705 from Anopheles gambiae (African malaria mosquito).